The following is a 554-amino-acid chain: Muellerian-inhibiting factor (554 aa).

Residues 1-24 (MQGPHLSPLVLLLATMGAVLQPEA) form the signal peptide. A propeptide spanning residues 25–446 (VENLATNTRG…GREGRGRTGR (422 aa)) is cleaved from the precursor. Asn-62, Asn-326, and Asn-410 each carry an N-linked (GlcNAc...) asparagine glycan. Disulfide bonds link Cys-456/Cys-520, Cys-482/Cys-551, and Cys-486/Cys-553.

It belongs to the TGF-beta family. As to quaternary structure, homodimer; disulfide-linked. Post-translationally, preproprotein is proteolytically processed to generate N- and C-terminal cleavage products that homodimerize and associate to form a biologically active non-covalent complex. Binding of the non-covalent complex to AMHRII induces dissociation of the pro-region from the mature C-terminal dimer. The N-terminal portion of the protein, despite having no intrinsic activity, has the role of amplifying the activity of the C-terminus. As to expression, expressed in Sertoli cells of fetal testes, and in testes just after birth, but absent in adult testes. In female, AMH is expressed after birth in the granulosa cells of the follicle.

Its subcellular location is the secreted. Plays an important role in several reproductive functions, including Muellerian duct regression during male fetal sexua,l differentiation and in the adult plays a role in Leydig cell differentiation and function. In female acts as a negative regulator of the primordial to primary follicle transition and decreases FSH sensitivity of growing follicles. Binds to its sole type II receptor, AMHR2 that recruits type I receptors ACVR1 and BMPR1A which subsequently activates the Smad pathway. The protein is Muellerian-inhibiting factor (Amh) of Mus musculus (Mouse).